Reading from the N-terminus, the 545-residue chain is CTP synthase (545 aa).

The segment at 1–266 (MATNYIFVTG…DTFVCDRFRL (266 aa)) is amidoligase domain. CTP is bound at residue S14. S14 is a UTP binding site. Residues 15–20 (SLGKGI) and D72 contribute to the ATP site. Positions 72 and 140 each coordinate Mg(2+). Residues 147 to 149 (DIE), 187 to 192 (KTKPTQ), and K223 contribute to the CTP site. UTP contacts are provided by residues 187–192 (KTKPTQ) and K223. 239 to 241 (KDV) contacts ATP. The 252-residue stretch at 291 to 542 (TIGMVGKYVE…VAAAKAYQDS (252 aa)) folds into the Glutamine amidotransferase type-1 domain. G352 serves as a coordination point for L-glutamine. C379 (nucleophile; for glutamine hydrolysis) is an active-site residue. Residues 380-383 (LGMQ), E403, and R470 each bind L-glutamine. Active-site residues include H515 and E517.

Belongs to the CTP synthase family. In terms of assembly, homotetramer.

The enzyme catalyses UTP + L-glutamine + ATP + H2O = CTP + L-glutamate + ADP + phosphate + 2 H(+). The catalysed reaction is L-glutamine + H2O = L-glutamate + NH4(+). It carries out the reaction UTP + NH4(+) + ATP = CTP + ADP + phosphate + 2 H(+). Its pathway is pyrimidine metabolism; CTP biosynthesis via de novo pathway; CTP from UDP: step 2/2. Allosterically activated by GTP, when glutamine is the substrate; GTP has no effect on the reaction when ammonia is the substrate. The allosteric effector GTP functions by stabilizing the protein conformation that binds the tetrahedral intermediate(s) formed during glutamine hydrolysis. Inhibited by the product CTP, via allosteric rather than competitive inhibition. Catalyzes the ATP-dependent amination of UTP to CTP with either L-glutamine or ammonia as the source of nitrogen. Regulates intracellular CTP levels through interactions with the four ribonucleotide triphosphates. In Actinobacillus pleuropneumoniae serotype 5b (strain L20), this protein is CTP synthase.